A 296-amino-acid chain; its full sequence is tRNA U34 carboxymethyltransferase (296 aa).

Carboxy-S-adenosyl-L-methionine contacts are provided by residues lysine 64, tryptophan 78, lysine 83, glycine 102, 124 to 126 (DPS), 151 to 152 (VE), tyrosine 171, and arginine 286.

The protein belongs to the class I-like SAM-binding methyltransferase superfamily. CmoB family. In terms of assembly, homotetramer.

It carries out the reaction carboxy-S-adenosyl-L-methionine + 5-hydroxyuridine(34) in tRNA = 5-carboxymethoxyuridine(34) in tRNA + S-adenosyl-L-homocysteine + H(+). Functionally, catalyzes carboxymethyl transfer from carboxy-S-adenosyl-L-methionine (Cx-SAM) to 5-hydroxyuridine (ho5U) to form 5-carboxymethoxyuridine (cmo5U) at position 34 in tRNAs. This is tRNA U34 carboxymethyltransferase from Sulfurimonas denitrificans (strain ATCC 33889 / DSM 1251) (Thiomicrospira denitrificans (strain ATCC 33889 / DSM 1251)).